A 244-amino-acid polypeptide reads, in one-letter code: ATP synthase subunit a, chloroplastic (244 aa).

The next 5 membrane-spanning stretches (helical) occupy residues 35–55, 92–112, 131–151, 196–216, and 217–237; these read QVLITSWVVIAILLGSAAIAV, VPFIGTLFLFIFVSNWSGALL, INTTVALALLTSVAYFYAGIT, LVVVVLVSLVPLVVPIPVMFL, and GLFTSGIQALIFATLAAAYIG.

It belongs to the ATPase A chain family. F-type ATPases have 2 components, CF(1) - the catalytic core - and CF(0) - the membrane proton channel. CF(1) has five subunits: alpha(3), beta(3), gamma(1), delta(1), epsilon(1). CF(0) has four main subunits: a, b, b' and c.

Its subcellular location is the plastid. It is found in the chloroplast thylakoid membrane. In terms of biological role, key component of the proton channel; it plays a direct role in the translocation of protons across the membrane. The protein is ATP synthase subunit a, chloroplastic of Coffea arabica (Arabian coffee).